A 338-amino-acid chain; its full sequence is Methionine import ATP-binding protein MetN 1 (338 aa).

Residues 2–241 (IELHQVSKSF…AKHATTKRFV (240 aa)) enclose the ABC transporter domain. 38-45 (GYSGAGKS) lines the ATP pocket.

The protein belongs to the ABC transporter superfamily. Methionine importer (TC 3.A.1.24) family. The complex is composed of two ATP-binding proteins (MetN), two transmembrane proteins (MetI) and a solute-binding protein (MetQ).

The protein localises to the cell membrane. It catalyses the reaction L-methionine(out) + ATP + H2O = L-methionine(in) + ADP + phosphate + H(+). The enzyme catalyses D-methionine(out) + ATP + H2O = D-methionine(in) + ADP + phosphate + H(+). Part of the ABC transporter complex MetNIQ involved in methionine import. Responsible for energy coupling to the transport system. This Listeria innocua serovar 6a (strain ATCC BAA-680 / CLIP 11262) protein is Methionine import ATP-binding protein MetN 1.